The chain runs to 517 residues: Tyrosine-protein kinase Fgr (517 aa).

Gly2 carries N-myristoyl glycine lipidation. 2 S-palmitoyl cysteine lipidation sites follow: Cys3 and Cys6. Positions 17 to 33 (VGLEGDFRSQGAEERYY) are enriched in basic and acidic residues. The tract at residues 17–46 (VGLEGDFRSQGAEERYYPDPTQGRSSSISP) is disordered. Phosphotyrosine is present on Tyr32. Phosphoserine is present on Ser50. One can recognise an SH3 domain in the interval 65–126 (TGVTIFVALY…PSNYVAPVDS (62 aa)). Positions 132-229 (WYFGKISRKD…GLCYLLTAPC (98 aa)) constitute an SH2 domain. Tyr196 carries the post-translational modification Phosphotyrosine. Phosphoserine is present on Ser206. One can recognise a Protein kinase domain in the interval 251–504 (IALDRRLGTG…YLQSFLEDYF (254 aa)). ATP contacts are provided by residues 257 to 265 (LGTGCFGDV) and Lys279. Catalysis depends on Asp370, which acts as the Proton acceptor. Phosphotyrosine; by autocatalysis is present on Tyr400. Tyr511 carries the phosphotyrosine; by SRC modification.

This sequence belongs to the protein kinase superfamily. Tyr protein kinase family. SRC subfamily. In terms of assembly, interacts with ITGB1, ITGB2, MS4A2/FCER1B and FCGR2. Interacts (via SH2 domain) with SYK (tyrosine phosphorylated). Interacts (via SH2 domain) with FLT3 (tyrosine phosphorylated). Interacts with PTK2/FAK1. Interacts (via SH2 domain) with HCLS1 (tyrosine phosphorylated by SYK). Interacts with SIRPA and PTPNS1. Interacts (not phosphorylated on tyrosine residues) with CBL; FGR tyrosine phosphorylation promotes dissociation. Interacts with CLNK. In terms of processing, ubiquitinated. Becomes ubiquitinated in response to ITGB2 signaling; this does not lead to degradation. Post-translationally, phosphorylated. Autophosphorylated on tyrosine residues. Becomes phosphorylated in response to FCGR2 engagement, cell adhesion and signaling by ITGB2. Prior phosphorylation at Tyr-511 by SRC inhibits ulterior autophosphorylation at Tyr-400. As to expression, detected in brain cortex (at protein level).

It is found in the cell membrane. The protein localises to the cell projection. The protein resides in the ruffle membrane. It localises to the cytoplasm. Its subcellular location is the cytosol. It is found in the cytoskeleton. The protein localises to the mitochondrion inner membrane. The protein resides in the mitochondrion intermembrane space. It carries out the reaction L-tyrosyl-[protein] + ATP = O-phospho-L-tyrosyl-[protein] + ADP + H(+). Activated by autophosphorylation. Prior phosphorylation at Tyr-511 by SRC inhibits ulterior autophosphorylation at Tyr-400. Activated by phorbol myristate acetate, phosphatidic acid and poly-Lys. Binding (via SH2 domain) of HCLS1 that is already phosphorylated by SYK strongly increases kinase activity. Functionally, non-receptor tyrosine-protein kinase that transmits signals from cell surface receptors devoid of kinase activity and contributes to the regulation of immune responses, including neutrophil, monocyte, macrophage and mast cell functions, cytoskeleton remodeling in response to extracellular stimuli, phagocytosis, cell adhesion and migration. Promotes mast cell degranulation, release of inflammatory cytokines and IgE-mediated anaphylaxis. Acts downstream of receptors that bind the Fc region of immunoglobulins, such as MS4A2/FCER1B, FCER1G and FCGR2. Acts downstream of ITGB1 and ITGB2, and regulates actin cytoskeleton reorganization, cell spreading and adhesion. Depending on the context, activates or inhibits cellular responses. Functions as a negative regulator of ITGB2 signaling, phagocytosis and SYK activity in monocytes. Required for normal ITGB1 and ITGB2 signaling, normal cell spreading and adhesion in neutrophils and macrophages. Functions as a positive regulator of cell migration and regulates cytoskeleton reorganization via RAC1 activation. Phosphorylates SYK (in vitro) and promotes SYK-dependent activation of AKT1 and MAP kinase signaling. Phosphorylates PLD2 in antigen-stimulated mast cells, leading to PLD2 activation and the production of the signaling molecules lysophosphatidic acid and diacylglycerol. Promotes activation of PIK3R1. Phosphorylates FASLG, and thereby regulates its ubiquitination and subsequent internalization. Phosphorylates ABL1. Promotes phosphorylation of CBL, CTTN, PIK3R1, PTK2/FAK1, PTK2B/PYK2 and VAV2. Phosphorylates HCLS1 that has already been phosphorylated by SYK, but not unphosphorylated HCLS1. Together with CLNK, it acts as a negative regulator of natural killer cell-activating receptors and inhibits interferon-gamma production. The sequence is that of Tyrosine-protein kinase Fgr (Fgr) from Rattus norvegicus (Rat).